The following is a 204-amino-acid chain: ADP-ribosylation factor-like protein 15 (204 aa).

GTP is bound by residues 39–46, 82–86, and 142–145; these read GLTGSGKT, ELGGA, and NHQD.

The protein belongs to the small GTPase superfamily. Arf family.

The sequence is that of ADP-ribosylation factor-like protein 15 (ARL15) from Pongo abelii (Sumatran orangutan).